The primary structure comprises 413 residues: Eukaryotic initiation factor 4A-10 (413 aa).

Positions 40–68 match the Q motif motif; it reads DSFDAMGLQENLLRGIYAYGFEKPSAIQQ. A Helicase ATP-binding domain is found at 71–241; the sequence is IVPFCKGLDV…RKFMNKPVRI (171 aa). 84 to 91 contacts ATP; sequence AQSGTGKT. Positions 189-192 match the DEAD box motif; it reads DEAD. In terms of domain architecture, Helicase C-terminal spans 252-413; it reads GIKQFYVNVD…ELPANVADLL (162 aa).

Belongs to the DEAD box helicase family. eIF4A subfamily. As to quaternary structure, eIF4F is a multi-subunit complex, the composition of which varies with external and internal environmental conditions. It is composed of at least EIF4A, EIF4E and EIF4G.

It carries out the reaction ATP + H2O = ADP + phosphate + H(+). Functionally, ATP-dependent RNA helicase which is a subunit of the eIF4F complex involved in cap recognition and is required for mRNA binding to ribosome. In the current model of translation initiation, eIF4A unwinds RNA secondary structures in the 5'-UTR of mRNAs which is necessary to allow efficient binding of the small ribosomal subunit, and subsequent scanning for the initiator codon. The protein is Eukaryotic initiation factor 4A-10 of Nicotiana tabacum (Common tobacco).